The chain runs to 483 residues: Proline--tRNA ligase (483 aa).

Belongs to the class-II aminoacyl-tRNA synthetase family. ProS type 3 subfamily. As to quaternary structure, homodimer.

It is found in the cytoplasm. The catalysed reaction is tRNA(Pro) + L-proline + ATP = L-prolyl-tRNA(Pro) + AMP + diphosphate. In terms of biological role, catalyzes the attachment of proline to tRNA(Pro) in a two-step reaction: proline is first activated by ATP to form Pro-AMP and then transferred to the acceptor end of tRNA(Pro). The polypeptide is Proline--tRNA ligase (Sulfurisphaera tokodaii (strain DSM 16993 / JCM 10545 / NBRC 100140 / 7) (Sulfolobus tokodaii)).